A 139-amino-acid chain; its full sequence is Nucleoside diphosphate kinase (139 aa).

6 residues coordinate ATP: Lys-11, Phe-59, Arg-87, Thr-93, Arg-104, and Asn-114. His-117 functions as the Pros-phosphohistidine intermediate in the catalytic mechanism.

It belongs to the NDK family. In terms of assembly, homotetramer. Mg(2+) serves as cofactor.

Its subcellular location is the cytoplasm. It carries out the reaction a 2'-deoxyribonucleoside 5'-diphosphate + ATP = a 2'-deoxyribonucleoside 5'-triphosphate + ADP. It catalyses the reaction a ribonucleoside 5'-diphosphate + ATP = a ribonucleoside 5'-triphosphate + ADP. In terms of biological role, major role in the synthesis of nucleoside triphosphates other than ATP. The ATP gamma phosphate is transferred to the NDP beta phosphate via a ping-pong mechanism, using a phosphorylated active-site intermediate. This is Nucleoside diphosphate kinase from Moorella thermoacetica (strain ATCC 39073 / JCM 9320).